The following is an 859-amino-acid chain: Mycobactin import ATP-binding/permease protein IrtA (859 aa).

Residues 1–292 (MARGLQGVML…SRLLAPLKLP (292 aa)) are Cytoplasmic-facing. The FAD-binding FR-type domain occupies 15-122 (ARDHTATVIE…MSLMGSSRFD (108 aa)). FAD is bound by residues 70 to 73 (RAYT), 87 to 91 (DVVLH), and 97 to 98 (AS). The interval 247-267 (HRATEPAATEPEVGAAPQPES) is disordered. A helical transmembrane segment spans residues 293 to 313 (LVLSGVLAALVTLAQLAPFVL). Residues 293–575 (LVLSGVLAAL…IAYGLGGLRT (283 aa)) enclose the ABC transmembrane type-1 domain. Residues 314-334 (LVELSRLLVSGAGAHRLFTVG) lie on the Periplasmic side of the membrane. Residues 335 to 355 (FAAVGLLGTGALLAAALTLWL) form a helical membrane-spanning segment. At 356-408 (HVIDARFARALRLRLLSKLSRLPLGWFTSRGSGSIKKLVTDDTLALHYLVTHA) the chain is on the cytoplasmic side. Residues 409 to 429 (VPDAVAAVVAPVGVLVYLFVV) traverse the membrane as a helical segment. Residues 430–432 (DWR) are Periplasmic-facing. A helical transmembrane segment spans residues 433–453 (VALVLFGPVLVYLTITSSLTI). The Cytoplasmic segment spans residues 454–519 (QSGPRIVQAQ…PLAGKKTLMD (66 aa)). Residues 520 to 540 (LATRPATFLWLIAATGTLLVA) traverse the membrane as a helical segment. Residues 541–548 (THRMDPVN) are Periplasmic-facing. The chain crosses the membrane as a helical span at residues 549–569 (LLPFMFLGTTFGARLLGIAYG). The Cytoplasmic segment spans residues 570-859 (LGGLRTGLLA…AVAAAQDGTR (290 aa)). Residues 610 to 843 (VVFDHVTFGY…GGRYCRLWDT (234 aa)) form the ABC transporter domain. 643–650 (GPSGSGKS) is a binding site for ATP.

This sequence belongs to the ABC transporter superfamily. Siderophore-Fe(3+) uptake transporter (SIUT) (TC 3.A.1.21) family. In terms of assembly, forms a heterodimer with IrtB. FAD serves as cofactor.

The protein resides in the cell inner membrane. Its function is as follows. Part of the ABC transporter complex IrtAB involved in the import of iron-bound mycobactin (Fe-MBT) and carboxymycobactin (Fe-cMBT). Mycobactins are then reduced by the siderophore interaction domain to facilitate iron release in the bacterial cell. Transmembrane domains (TMD) form a pore in the membrane and the ATP-binding domain (NBD) is responsible for energy generation. Required for replication in human macrophages and in mouse lungs. The chain is Mycobactin import ATP-binding/permease protein IrtA (irtA) from Mycobacterium tuberculosis (strain ATCC 25618 / H37Rv).